The chain runs to 622 residues: Chaperone protein HscA homolog (622 aa).

Belongs to the heat shock protein 70 family.

In terms of biological role, chaperone involved in the maturation of iron-sulfur cluster-containing proteins. Has a low intrinsic ATPase activity which is markedly stimulated by HscB. This Verminephrobacter eiseniae (strain EF01-2) protein is Chaperone protein HscA homolog.